A 286-amino-acid chain; its full sequence is MEMLQKRKHQTIDETSLNNLIENEKKKIKSLLAFGVPKECVLSRSFTPCELLGPERDHLGMLMFRLETDAESPKFLLISVLFLAMNAFNVSFCTRTSLANLYKTSLVDSINTMLDSCSYLEEKVSLFGVTNYISQGTNCLISCVMQGHVYDVRKENIYGLVILKDLLLEPDWEPRQNAIQYIYLCYIYRQAFNKIEYGIYIVLSELTHEEVLIDLLRNKFSKERFMFMNYLINGDGNLNYFGSLQRIGHCKTQNIKSGILDLQGISLTIIRLKDVFVELCERKIFL.

The protein belongs to the herpesviridae TRX1 protein family. In terms of assembly, interacts with TRX2, MCP and capsid vertex component 2/CVC2.

Its subcellular location is the virion. It is found in the host nucleus. Functionally, structural component of the T=16 icosahedral capsid. The capsid is composed of pentamers and hexamers of major capsid protein/MCP, which are linked together by heterotrimers called triplexes. These triplexes are formed by a single molecule of triplex protein 1/TRX1 and two copies of triplex protein 2/TRX2. Additionally, TRX1 is required for efficient transport of TRX2 to the nucleus, which is the site of capsid assembly. The polypeptide is Triplex capsid protein 1 (Human herpesvirus 7 (strain JI) (HHV-7)).